The sequence spans 347 residues: MHIPDGYLSPVTCAVTFAATVPFWYVSMRKLDRDLNGQHLPLVALVAAFSFVIMMFNLPIPGGTTAHAAGIGIAAVLLGPWAAVPAISVALLIQAIFFGDGGITAFGANCLNMAVVGPMVAAAVYALGTRGAAIGSRRRVIMAGLASYAGLNAAALLAAVEFGVQPLFFHDAAGAPLYAPYPLSVAVPAMALTHLTIAGAAEFIVTAGLVAWLQRSNPELLAPRRAPAAPERHLRLWAGIGALVVLCPLGLIAAGTAWGEWGAEDFTSEAGRAAMAGASGGVAPPAGLPGGFARLAELWSAPLPDYAPAFVQNAPLGYVLSALLGVALIVAGIGLSAGLRALTRRAG.

Transmembrane regions (helical) follow at residues 6–26 (GYLSPVTCAVTFAATVPFWYV), 40–60 (LPLVALVAAFSFVIMMFNLPI), 73–93 (IAAVLLGPWAAVPAISVALLI), 96–116 (IFFGDGGITAFGANCLNMAVV), 140–160 (VIMAGLASYAGLNAAALLAAV), 185–205 (VAVPAMALTHLTIAGAAEFIV), 236–256 (LWAGIGALVVLCPLGLIAAGT), 273–293 (AAMAGASGGVAPPAGLPGGFA), and 319–339 (VLSALLGVALIVAGIGLSAGL).

Belongs to the CbiM family. NikM subfamily. Forms an energy-coupling factor (ECF) transporter complex composed of an ATP-binding protein (A component, NikO), a transmembrane protein (T component, NikQ) and a fused possible substrate-capture protein (S component, NikMN) of unknown stoichimetry.

The protein localises to the cell inner membrane. Its function is as follows. Part of the energy-coupling factor (ECF) transporter complex NikMNQO involved in nickel import. The complex confers nickel uptake upon expression in E.coli; can also transport cobalt with a very low affinity. The chain is Fused nickel transport protein NikMN (nikMN) from Rhodobacter capsulatus (strain ATCC BAA-309 / NBRC 16581 / SB1003).